A 276-amino-acid chain; its full sequence is 5-deoxy-glucuronate isomerase (276 aa).

Belongs to the isomerase IolB family.

The catalysed reaction is 5-deoxy-D-glucuronate = 5-dehydro-2-deoxy-D-gluconate. It functions in the pathway polyol metabolism; myo-inositol degradation into acetyl-CoA; acetyl-CoA from myo-inositol: step 4/7. Functionally, involved in the isomerization of 5-deoxy-glucuronate (5DG) to 5-dehydro-2-deoxy-D-gluconate (DKG or 2-deoxy-5-keto-D-gluconate). The chain is 5-deoxy-glucuronate isomerase from Geobacillus kaustophilus (strain HTA426).